The sequence spans 461 residues: MDRQSYLSELKEPVMETQQIKETIEMISEENLDIRTITMGISLLDCVTGDLQTTADKVYAKIMAKAANLVPVADAISDEYGIPIVNKRISVTPVSLLAGADQNLDFRPIAQAMDRAAKDLGVDLIGGYTALVQNGSTPAETALMKSLPEVLDTTERVCASVNIGSTRSGLNMDAVKLMGTVVKEVAMRKPQNAMKLVVFCNAVEDNPFMAGAFWGISEGDVAINTGVSGPGVVERAIAAKPAASFEEICETIKQTAFKVSRMGQFVGKVAADRLDVPFNIVDLSLAPTPAKGDSVAQILETMGLSHVGTPGTTAALALLNDAVKKGGIMAAERVGGLSGAFIPVSEDANMITAAAKGQISLEKLEAMTAVCSVGLDMVAVPGDTPDATISGMIADEAAIGMINNKTTAVRVIPVPGKQVGDTVEFGGIFGTAPIMAINDGNAQQFINRGGRIPAPIHSFKN.

This sequence belongs to the UPF0210 family. Homodimer.

The sequence is that of UPF0210 protein LCABL_10110 from Lacticaseibacillus casei (strain BL23) (Lactobacillus casei).